The following is a 284-amino-acid chain: Acetyl-coenzyme A carboxylase carboxyl transferase subunit beta (284 aa).

The CoA carboxyltransferase N-terminal domain occupies 24–284; it reads GLWYKSPTGK…LDLILNNEVR (261 aa).

It belongs to the AccD/PCCB family. As to quaternary structure, acetyl-CoA carboxylase is a heterohexamer composed of biotin carboxyl carrier protein (AccB), biotin carboxylase (AccC) and two subunits each of ACCase subunit alpha (AccA) and ACCase subunit beta (AccD).

The protein localises to the cytoplasm. The enzyme catalyses N(6)-carboxybiotinyl-L-lysyl-[protein] + acetyl-CoA = N(6)-biotinyl-L-lysyl-[protein] + malonyl-CoA. The protein operates within lipid metabolism; malonyl-CoA biosynthesis; malonyl-CoA from acetyl-CoA: step 1/1. In terms of biological role, component of the acetyl coenzyme A carboxylase (ACC) complex. Biotin carboxylase (BC) catalyzes the carboxylation of biotin on its carrier protein (BCCP) and then the CO(2) group is transferred by the transcarboxylase to acetyl-CoA to form malonyl-CoA. This chain is Acetyl-coenzyme A carboxylase carboxyl transferase subunit beta, found in Flavobacterium psychrophilum (strain ATCC 49511 / DSM 21280 / CIP 103535 / JIP02/86).